We begin with the raw amino-acid sequence, 159 residues long: Late embryogenesis abundant protein 50 (159 aa).

SMP domains are found at residues 30 to 87 and 96 to 151; these read TTLT…RNQK and NLGD…YKLN.

Belongs to the LEA type SMP family.

It is found in the cytoplasm. Its subcellular location is the nucleus. Functionally, LEA proteins are late embryonic proteins abundant in higher plant seed embryos. The function of those proteins is not known. This is Late embryogenesis abundant protein 50 from Arabidopsis thaliana (Mouse-ear cress).